The following is a 335-amino-acid chain: L-tyrosine isonitrile synthase (335 aa).

The protein belongs to the isocyanide synthase family.

It catalyses the reaction D-ribulose 5-phosphate + L-tyrosine = (2S)-3-(4-hydroxyphenyl)-2-isocyanopropanoate + hydroxyacetone + formaldehyde + phosphate + H2O + H(+). Its function is as follows. Involved in the biosynthesis of rhabduscin, a tyrosine derivative which is a potent inhibitor of phenoloxidase, a key component of the insect's innate immune system. Responsible for the synthesis of the isonitrile group on tyrosine using the C2 of ribulose 5-phosphate as the source of the carbon atom. This Xenorhabdus nematophila (strain ATCC 19061 / DSM 3370 / CCUG 14189 / LMG 1036 / NCIMB 9965 / AN6) protein is L-tyrosine isonitrile synthase.